Reading from the N-terminus, the 66-residue chain is Early E3 7.7 kDa protein (66 aa).

N-linked (GlcNAc...) asparagine; by host glycosylation is found at Asn7 and Asn24. Residues 44–64 (ITILIVIGILILSVILYFLFS) form a helical membrane-spanning segment.

The protein localises to the host nucleus membrane. The chain is Early E3 7.7 kDa protein from Human adenovirus B serotype 7 (HAdV-7).